The chain runs to 306 residues: UDP-3-O-acyl-N-acetylglucosamine deacetylase (306 aa).

Histidine 79, histidine 238, and aspartate 242 together coordinate Zn(2+). Histidine 265 serves as the catalytic Proton donor.

Belongs to the LpxC family. Requires Zn(2+) as cofactor.

It carries out the reaction a UDP-3-O-[(3R)-3-hydroxyacyl]-N-acetyl-alpha-D-glucosamine + H2O = a UDP-3-O-[(3R)-3-hydroxyacyl]-alpha-D-glucosamine + acetate. Its pathway is glycolipid biosynthesis; lipid IV(A) biosynthesis; lipid IV(A) from (3R)-3-hydroxytetradecanoyl-[acyl-carrier-protein] and UDP-N-acetyl-alpha-D-glucosamine: step 2/6. In terms of biological role, catalyzes the hydrolysis of UDP-3-O-myristoyl-N-acetylglucosamine to form UDP-3-O-myristoylglucosamine and acetate, the committed step in lipid A biosynthesis. In Shewanella piezotolerans (strain WP3 / JCM 13877), this protein is UDP-3-O-acyl-N-acetylglucosamine deacetylase.